A 216-amino-acid chain; its full sequence is MTDELDPALIERARKLFAGDWQFIWASPSVETLPPMQGLEVAFAGRSNVGKSSLINALTGRNGLARTSHTPGRTQELIFFEGPADAGFRLVDMPGYGYAAAPKTKIASWTKLIHQFLQGRATLVRVYVLIDARHGIKDVDNEVLTTLDKSAVSYQIVLTKADQVKPAELAERVAATTEALRKHPAAFPEIVVTSSRNASGMPELRAAIIKLVAERS.

In terms of domain architecture, EngB-type G spans 37-214; sequence QGLEVAFAGR…RAAIIKLVAE (178 aa). GTP is bound by residues 45–52, 72–76, 92–95, 159–162, and 193–195; these read GRSNVGKS, GRTQE, DMPG, TKAD, and TSS. Positions 52 and 74 each coordinate Mg(2+).

It belongs to the TRAFAC class TrmE-Era-EngA-EngB-Septin-like GTPase superfamily. EngB GTPase family. The cofactor is Mg(2+).

In terms of biological role, necessary for normal cell division and for the maintenance of normal septation. The sequence is that of Probable GTP-binding protein EngB from Rhodopseudomonas palustris (strain BisA53).